Reading from the N-terminus, the 223-residue chain is Thiamine-phosphate synthase (223 aa).

4-amino-2-methyl-5-(diphosphooxymethyl)pyrimidine is bound by residues 37–41 and aspartate 72; that span reads QFREK. 2 residues coordinate Mg(2+): aspartate 73 and aspartate 92. Residue serine 110 coordinates 4-amino-2-methyl-5-(diphosphooxymethyl)pyrimidine. Position 136–138 (136–138) interacts with 2-[(2R,5Z)-2-carboxy-4-methylthiazol-5(2H)-ylidene]ethyl phosphate; it reads TQS. Lysine 139 serves as a coordination point for 4-amino-2-methyl-5-(diphosphooxymethyl)pyrimidine. 2-[(2R,5Z)-2-carboxy-4-methylthiazol-5(2H)-ylidene]ethyl phosphate contacts are provided by residues glycine 168 and 188–189; that span reads IS.

It belongs to the thiamine-phosphate synthase family. Requires Mg(2+) as cofactor.

It carries out the reaction 2-[(2R,5Z)-2-carboxy-4-methylthiazol-5(2H)-ylidene]ethyl phosphate + 4-amino-2-methyl-5-(diphosphooxymethyl)pyrimidine + 2 H(+) = thiamine phosphate + CO2 + diphosphate. The enzyme catalyses 2-(2-carboxy-4-methylthiazol-5-yl)ethyl phosphate + 4-amino-2-methyl-5-(diphosphooxymethyl)pyrimidine + 2 H(+) = thiamine phosphate + CO2 + diphosphate. The catalysed reaction is 4-methyl-5-(2-phosphooxyethyl)-thiazole + 4-amino-2-methyl-5-(diphosphooxymethyl)pyrimidine + H(+) = thiamine phosphate + diphosphate. The protein operates within cofactor biosynthesis; thiamine diphosphate biosynthesis; thiamine phosphate from 4-amino-2-methyl-5-diphosphomethylpyrimidine and 4-methyl-5-(2-phosphoethyl)-thiazole: step 1/1. Functionally, condenses 4-methyl-5-(beta-hydroxyethyl)thiazole monophosphate (THZ-P) and 2-methyl-4-amino-5-hydroxymethyl pyrimidine pyrophosphate (HMP-PP) to form thiamine monophosphate (TMP). The protein is Thiamine-phosphate synthase of Streptococcus agalactiae serotype Ia (strain ATCC 27591 / A909 / CDC SS700).